A 212-amino-acid chain; its full sequence is Ribonuclease HII (212 aa).

The RNase H type-2 domain occupies 19 to 212 (CIIVGVDEVG…SKISYMFKNS (194 aa)). 3 residues coordinate a divalent metal cation: aspartate 25, glutamate 26, and aspartate 120.

It belongs to the RNase HII family. The cofactor is Mn(2+). Mg(2+) is required as a cofactor.

The protein resides in the cytoplasm. It carries out the reaction Endonucleolytic cleavage to 5'-phosphomonoester.. Its function is as follows. Endonuclease that specifically degrades the RNA of RNA-DNA hybrids. In Ehrlichia ruminantium (strain Welgevonden), this protein is Ribonuclease HII.